Here is a 662-residue protein sequence, read N- to C-terminus: MSDPNQNGQQGGQQNAGGNYYQQYFQKLTQQAQAGGGYQPYGGYGGYGGYGGYQPYGGYQQFYQDGQQAQQGAYNGYPYQAQGAPGGFNNYNNQFQPQQQSQGMTLDDFHKQKQTSQSAPPKQKKSLKLVSSSGIKLANATKKPKEDEKKEEEPKKEEKKAEPKEQESKKEEPKREGTPRPAAAKDEKKEDLPKLEKLKIKEEQAAANASGADSLIKEQEEEVDEGVVNDMFGGKDHMSIIFMGHVDAGKSTMGGNILYMTGSVDKRTVEKYEREAKDAGKQGWYLSWVMDTNREERDDGKTIEVGRAYFETEKRRYTILDAPGHKMYVSEMIGGASQADVGILVISARKGEYETGFEKGGQTREHALLAKTQGVNKLIVTINKMDDPTVNWSKERYDQCVKNLSNFLKAIGYNVKEEVVFMPVSGYSGAGLGTRVDPKECPWYDGPALLEYMDNMSHVDRKMNAPFMLPIAAKMRDMGTIVEGKIESGHIRKGHSTLLMPNKIPVEIQNIYNETENEVDMAICGEQVKLKIKGVEEEDIAPGFVLTSPKNPVKNVTRFVAQVAIVELKSILSSGFSCVMHVHTAIEEVRITKLLHKLERGTNRKSKKPPAFAKKGMKIIAVLETERPVCVETYQDYPQLGRFTLRDQGTTIAIGKIVKIIE.

The tract at residues 9 to 102 is several sort of repeats; that stretch reads QQGGQQNAGG…NQFQPQQQSQ (94 aa). Low complexity-rich tracts occupy residues 73-102 and 128-137; these read AYNG…QQSQ and KLVSSSGIKL. The interval 73 to 193 is disordered; that stretch reads AYNGYPYQAQ…AKDEKKEDLP (121 aa). Residues 103–230 form a charged region; it reads GMTLDDFHKQ…EEVDEGVVND (128 aa). The span at 143–193 shows a compositional bias: basic and acidic residues; it reads KPKEDEKKEEEPKKEEKKAEPKEQESKKEEPKREGTPRPAAAKDEKKEDLP. Residues 235 to 461 form the tr-type G domain; the sequence is KDHMSIIFMG…YMDNMSHVDR (227 aa). Residues 244–251 form a G1 region; the sequence is GHVDAGKS. 244 to 251 is a GTP binding site; it reads GHVDAGKS. Positions 300-304 are G2; that stretch reads GKTIE. Thr-318 carries the phosphothreonine modification. The interval 321-324 is G3; it reads DAPG. GTP is bound by residues 321–325 and 383–386; these read DAPGH and NKMD. The segment at 383–386 is G4; it reads NKMD. Residues 425–427 are G5; it reads SGY.

The protein belongs to the TRAFAC class translation factor GTPase superfamily. Classic translation factor GTPase family. ERF3 subfamily.

It is found in the cytoplasm. In terms of biological role, involved in translation termination. Stimulates the activity of ERF1. Binds guanine nucleotides. The chain is Eukaryotic peptide chain release factor GTP-binding subunit (SUP35) from Zygosaccharomyces rouxii.